Consider the following 386-residue polypeptide: L-prolyl-[peptidyl-carrier protein] dehydrogenase (386 aa).

FAD is bound by residues 125 to 134 and 158 to 160; these read NAATEPDAGS and FIT. The Proton acceptor role is filled by Glu244. FAD-binding positions include Arg270, Gln281, 338 to 342, and 367 to 369; these read QTFGG and TND.

The protein belongs to the acyl-CoA dehydrogenase family. FAD is required as a cofactor.

The catalysed reaction is L-prolyl-[peptidyl-carrier protein] + 2 oxidized [electron-transfer flavoprotein] + H(+) = (1H-pyrrole-2-carbonyl)-[peptidyl-carrier protein] + 2 reduced [electron-transfer flavoprotein]. It participates in antibiotic biosynthesis; prodigiosin biosynthesis. Functionally, involved in the biosynthesis of 4-methoxy-2,2'-bipyrrole-5-carbaldehyde (MBC), one of the terminal products involved in the biosynthesis of the red antibiotic prodigiosin (Pig). Catalyzes the desaturation of the L-prolyl-[PigG] to yield 1H-pyrrole-2-carbonyl-[PigG]. The chain is L-prolyl-[peptidyl-carrier protein] dehydrogenase from Serratia sp. (strain ATCC 39006) (Prodigiosinella confusarubida).